Reading from the N-terminus, the 807-residue chain is Glycerol-3-phosphate acyltransferase (807 aa).

The short motif at 308–313 (CHRSHM) is the HXXXXD motif element.

The protein belongs to the GPAT/DAPAT family.

The protein resides in the cell inner membrane. It carries out the reaction sn-glycerol 3-phosphate + an acyl-CoA = a 1-acyl-sn-glycero-3-phosphate + CoA. Its pathway is phospholipid metabolism; CDP-diacylglycerol biosynthesis; CDP-diacylglycerol from sn-glycerol 3-phosphate: step 1/3. This chain is Glycerol-3-phosphate acyltransferase, found in Shewanella sp. (strain MR-4).